Here is a 102-residue protein sequence, read N- to C-terminus: NADH-quinone oxidoreductase subunit K 1 (102 aa).

Helical transmembrane passes span 3 to 23, 29 to 49, and 62 to 82; these read TLTT…LGIL, VGML…FMAF, and IIAL…LSII.

It belongs to the complex I subunit 4L family. As to quaternary structure, NDH-1 is composed of 14 different subunits. Subunits NuoA, H, J, K, L, M, N constitute the membrane sector of the complex.

It is found in the cell inner membrane. The catalysed reaction is a quinone + NADH + 5 H(+)(in) = a quinol + NAD(+) + 4 H(+)(out). Functionally, NDH-1 shuttles electrons from NADH, via FMN and iron-sulfur (Fe-S) centers, to quinones in the respiratory chain. The immediate electron acceptor for the enzyme in this species is believed to be ubiquinone. Couples the redox reaction to proton translocation (for every two electrons transferred, four hydrogen ions are translocated across the cytoplasmic membrane), and thus conserves the redox energy in a proton gradient. The polypeptide is NADH-quinone oxidoreductase subunit K 1 (Syntrophobacter fumaroxidans (strain DSM 10017 / MPOB)).